A 164-amino-acid polypeptide reads, in one-letter code: S-ribosylhomocysteine lyase (164 aa).

His61, His65, and Cys131 together coordinate Fe cation.

It belongs to the LuxS family. Homodimer. Fe cation is required as a cofactor.

It catalyses the reaction S-(5-deoxy-D-ribos-5-yl)-L-homocysteine = (S)-4,5-dihydroxypentane-2,3-dione + L-homocysteine. Involved in the synthesis of autoinducer 2 (AI-2) which is secreted by bacteria and is used to communicate both the cell density and the metabolic potential of the environment. The regulation of gene expression in response to changes in cell density is called quorum sensing. Catalyzes the transformation of S-ribosylhomocysteine (RHC) to homocysteine (HC) and 4,5-dihydroxy-2,3-pentadione (DPD). The polypeptide is S-ribosylhomocysteine lyase (Bifidobacterium longum (strain NCC 2705)).